Consider the following 443-residue polypeptide: MLSGDEFARRAVAALKPRRIAVLSVHTSPLAQPGTGDAGGMNVYVLQTALQLARRGVAVDIFTRATSSSDEPVVSVTDGVTVRNIVAGPFEGLDKYDLPTQLCAFTAGVLRAEAVHEPGYYNLVHSHYWLSGQAGWLARDRWGVPLVHTAHTLAAVKNQTLAEGDRPEPALRGVGEQQVVDEADRLIVNTKDEADQLVSIHNADPARIDIVHPGVDLDVFTPGDKAAARAEFGLRADEQVVAFVGRIQPLKAPDLLVRAAERLPGVRVLIVGGPSGSGLDEPTALQDLAVDLGIADRVTFLPPQTRERLAQVYRAADIVAVPSYSESFGLVAIEAQACGTPVVAAAVGGLPVAVADQRTGLLVPTHRTEDWADAIGELLVRKGAGFSRAAVEHAAGFSWSSTADSLLSSYGRAIADYRAPQRPSTQWASRARFRPRRLSGLRR.

Residue His26 participates in 1D-myo-inositol 3-phosphate binding. UDP-N-acetyl-alpha-D-glucosamine contacts are provided by residues 32–33 (QP) and Gly40. 1D-myo-inositol 3-phosphate contacts are provided by residues 37 to 42 (DAGGMN), Lys95, Tyr128, Thr152, and Arg172. Arg246, Lys251, and Gln304 together coordinate UDP-N-acetyl-alpha-D-glucosamine. Positions 313, 314, and 316 each coordinate Mg(2+). 2 residues coordinate UDP-N-acetyl-alpha-D-glucosamine: Glu326 and Glu334. Position 340 (Thr340) interacts with Mg(2+).

It belongs to the glycosyltransferase group 1 family. MshA subfamily. Homodimer.

The catalysed reaction is 1D-myo-inositol 3-phosphate + UDP-N-acetyl-alpha-D-glucosamine = 1D-myo-inositol 2-acetamido-2-deoxy-alpha-D-glucopyranoside 3-phosphate + UDP + H(+). Functionally, catalyzes the transfer of a N-acetyl-glucosamine moiety to 1D-myo-inositol 3-phosphate to produce 1D-myo-inositol 2-acetamido-2-deoxy-glucopyranoside 3-phosphate in the mycothiol biosynthesis pathway. This Mycobacteroides abscessus (strain ATCC 19977 / DSM 44196 / CCUG 20993 / CIP 104536 / JCM 13569 / NCTC 13031 / TMC 1543 / L948) (Mycobacterium abscessus) protein is D-inositol 3-phosphate glycosyltransferase.